We begin with the raw amino-acid sequence, 114 residues long: T cell receptor beta variable 10-3 (114 aa).

The signal sequence occupies residues 1–21 (MGTRLFFYVALCLLWTGHMDA). The Ig-like domain occupies 22–114 (GITQSPRHKV…TSVYFCAISE (93 aa)). A disulfide bond links Cys-42 and Cys-110.

In terms of assembly, alpha-beta TR is a heterodimer composed of an alpha and beta chain; disulfide-linked. The alpha-beta TR is associated with the transmembrane signaling CD3 coreceptor proteins to form the TR-CD3 (TcR or TCR). The assembly of alpha-beta TR heterodimers with CD3 occurs in the endoplasmic reticulum where a single alpha-beta TR heterodimer associates with one CD3D-CD3E heterodimer, one CD3G-CD3E heterodimer and one CD247 homodimer forming a stable octameric structure. CD3D-CD3E and CD3G-CD3E heterodimers preferentially associate with TR alpha and TR beta chains, respectively. The association of the CD247 homodimer is the last step of TcR assembly in the endoplasmic reticulum and is required for transport to the cell surface.

It is found in the cell membrane. Functionally, v region of the variable domain of T cell receptor (TR) beta chain that participates in the antigen recognition. Alpha-beta T cell receptors are antigen specific receptors which are essential to the immune response and are present on the cell surface of T lymphocytes. Recognize peptide-major histocompatibility (MH) (pMH) complexes that are displayed by antigen presenting cells (APC), a prerequisite for efficient T cell adaptive immunity against pathogens. Binding of alpha-beta TR to pMH complex initiates TR-CD3 clustering on the cell surface and intracellular activation of LCK that phosphorylates the ITAM motifs of CD3G, CD3D, CD3E and CD247 enabling the recruitment of ZAP70. In turn ZAP70 phosphorylates LAT, which recruits numerous signaling molecules to form the LAT signalosome. The LAT signalosome propagates signal branching to three major signaling pathways, the calcium, the mitogen-activated protein kinase (MAPK) kinase and the nuclear factor NF-kappa-B (NF-kB) pathways, leading to the mobilization of transcription factors that are critical for gene expression and essential for T cell growth and differentiation. The T cell repertoire is generated in the thymus, by V-(D)-J rearrangement. This repertoire is then shaped by intrathymic selection events to generate a peripheral T cell pool of self-MH restricted, non-autoaggressive T cells. Post-thymic interaction of alpha-beta TR with the pMH complexes shapes TR structural and functional avidity. This Homo sapiens (Human) protein is T cell receptor beta variable 10-3.